The following is a 208-amino-acid chain: 28 kDa heat- and acid-stable phosphoprotein homolog (208 aa).

Disordered regions lie at residues 1 to 133 and 145 to 208; these read MAGG…VTKK and LSRR…LGLA. The segment covering 16–44 has biased composition (basic and acidic residues); it reads FGRDYERSKGKISRDRVYDEEDIIKRNQE. 2 stretches are compositionally biased toward low complexity: residues 52-69 and 84-100; these read GSES…NKSK and RNPN…PTTK. Over residues 105-121 the composition is skewed to acidic residues; it reads SDSEDDSDKESDSEDEI. Residues 137-206 are a coiled coil; that stretch reads INVNAKVELS…EKMAERRRLG (70 aa). Composition is skewed to basic and acidic residues over residues 145–154 and 162–208; these read LSRREKEELA and QNEK…LGLA.

It belongs to the PDAP1 family.

This Dictyostelium discoideum (Social amoeba) protein is 28 kDa heat- and acid-stable phosphoprotein homolog.